Reading from the N-terminus, the 239-residue chain is MQKLELLYEGKAKRIYRTEAADMVWVEYKDSATAFNGEKKATITGKGRLNNEITTLLFRKLQEVGIKTHFVEKLSDTEQLVKKVSIIPLEVVTRNVIAGSLSKRLGMEEGTALTTPIVEFYYKDDDLGDPLVTEDHIRLLNVATPEQVSVLRDAALQINQVMIEHFASCRVRLVDFKLEFGVTEEGEIILADEISPDTCRLWDETSNEKFDKDVFRRDLGNLTEAYEEILKRLGGASHV.

The protein belongs to the SAICAR synthetase family.

It carries out the reaction 5-amino-1-(5-phospho-D-ribosyl)imidazole-4-carboxylate + L-aspartate + ATP = (2S)-2-[5-amino-1-(5-phospho-beta-D-ribosyl)imidazole-4-carboxamido]succinate + ADP + phosphate + 2 H(+). It participates in purine metabolism; IMP biosynthesis via de novo pathway; 5-amino-1-(5-phospho-D-ribosyl)imidazole-4-carboxamide from 5-amino-1-(5-phospho-D-ribosyl)imidazole-4-carboxylate: step 1/2. This is Phosphoribosylaminoimidazole-succinocarboxamide synthase from Bacillus mycoides (strain KBAB4) (Bacillus weihenstephanensis).